Reading from the N-terminus, the 523-residue chain is Histidine ammonia-lyase (523 aa).

A cross-link (5-imidazolinone (Ala-Gly)) is located at residues 148–150 (ASG). A 2,3-didehydroalanine (Ser) modification is found at serine 149.

The protein belongs to the PAL/histidase family. Contains an active site 4-methylidene-imidazol-5-one (MIO), which is formed autocatalytically by cyclization and dehydration of residues Ala-Ser-Gly.

Its subcellular location is the cytoplasm. The enzyme catalyses L-histidine = trans-urocanate + NH4(+). Its pathway is amino-acid degradation; L-histidine degradation into L-glutamate; N-formimidoyl-L-glutamate from L-histidine: step 1/3. In Chloroflexus aurantiacus (strain ATCC 29366 / DSM 635 / J-10-fl), this protein is Histidine ammonia-lyase.